Consider the following 214-residue polypeptide: Acyl-homoserine-lactone synthase (214 aa).

Belongs to the autoinducer synthase family.

It carries out the reaction a fatty acyl-[ACP] + S-adenosyl-L-methionine = an N-acyl-L-homoserine lactone + S-methyl-5'-thioadenosine + holo-[ACP] + H(+). Functionally, required for the synthesis of autoinducer molecules such as OHHL (N-(3-oxohexanoyl)-L-homoserine lactone), and HHL (N-hexanoyl-L-homoserine lactone). This chain is Acyl-homoserine-lactone synthase (yenI), found in Yersinia enterocolitica.